The sequence spans 109 residues: Gliadoralin-A (109 aa).

The signal sequence occupies residues 1–16; that stretch reads MLVILLMVVVLALSSA. A Pyrrolidone carboxylic acid modification is found at glutamine 17. Residues 17 to 109 form a disordered region; that stretch reads QDPNRDFVVS…PRYQQPRRAV (93 aa). A compositionally biased stretch (low complexity) spans 35–109; that stretch reads PSSQQGTVGG…PRYQQPRRAV (75 aa). A propeptide spanning residues 107–109 is cleaved from the precursor; sequence RAV.

In terms of processing, predominantly proteolytically processed at its C-terminus before secretion to produce the major form gliadoralin A 1-90. Further proteloytically processed after secretion to produce minor forms. Potential substrate of transglutaminase. In terms of tissue distribution, found in saliva (at protein level). Secreted from the submandibular gland.

The protein localises to the secreted. In terms of biological role, may play a role in the formation of the protective mucosal protein pellicle involved in the reinforcement and protection of oral mucosal epithelial surface. This chain is Gliadoralin-A, found in Rattus norvegicus (Rat).